A 342-amino-acid chain; its full sequence is Putative TPR repeat-containing protein R856 (342 aa).

TPR repeat units follow at residues 36–69, 77–110, 119–152, 161–194, 203–236, 245–278, and 291–324; these read VHIFNKAAIVFHRNGQHKKSLEMYEKAFGNIFNG, FYSVNGMASMYQALGDYDIAIKKYNSVIKIIKDM, VYALMGIASISQIKGNYDEALSKYNEALEINEKL, AFVLNRLGMLYHELDDNDKSIDHFNESLKIYREK, AFTISRLAQSLLKMGNDSEALEKYQESIDIFNKI, AFSLYGIGTVYEFRSEYSKALEKYQESLQTYKNV, and ASCLYKIGLVYKLSGNDNESTTYLNQANQMFEST.

This is Putative TPR repeat-containing protein R856 from Acanthamoeba polyphaga mimivirus (APMV).